The primary structure comprises 588 residues: Zinc finger protein 599 (588 aa).

The KRAB domain occupies 9–80; sequence VSFEDVVVTF…KRGLSQSTCA (72 aa). C2H2-type zinc fingers lie at residues 199–221, 227–249, 255–277, 283–305, 311–333, 339–361, 367–389, 395–417, 423–445, 451–473, 479–501, 507–529, 535–557, and 563–585; these read YTCTECGKGFSKKWALVRHQQIH, YECNECGKACRYMADVIRHMRLH, YKCIECGKAFKRRFHLTEHQRIH, YECKECGKAFTHRSSFIQHNMTH, FLCKECGKAFYYSSSFAQHMRIH, YECGECGKAFTHRSTFIQHNVTH, FLCKECGKTFCLNSSFTQHMRIH, YECGECGKAFTHRSTFIRHKRTH, FECKECGKAFCDSSSLIQHMRIH, YECSECGKAFTHHSVFIRHNRTH, LECKECAKAFYYSSSFTRHMRIH, YVCRECGKAFTQPANFVRHNRIH, FECKECEKAFCDNFALTQHMRTH, and FECNECGKTFSHSSSFTHHRKIH.

It belongs to the krueppel C2H2-type zinc-finger protein family.

The protein resides in the nucleus. In terms of biological role, may be involved in transcriptional regulation. The polypeptide is Zinc finger protein 599 (ZNF599) (Homo sapiens (Human)).